The chain runs to 2515 residues: Probable maltase-glucoamylase 2 (2515 aa).

At 1–9 (MARKLSVLE) the chain is on the cytoplasmic side. Residues 10 to 30 (VLLIIFCLIVVTIDILLLLLV) form a helical membrane-spanning segment. Over 31-482 (LEETSDTSFT…DGVWIEMNEV (452 aa)) the chain is Lumenal. The region spanning 41–88 (PECPEIPQSERIDCTPDQEVTEDICRWQYKCCWSPVADANVPRCFFPW) is the P-type 1 domain. Disulfide bonds link C43–C72, C54–C71, and C65–C84. The interval 152-865 (SHENINLVDG…MDKQPANFIV (714 aa)) is maltase. The N-linked (GlcNAc...) asparagine glycan is linked to N167. Position 371 is a sulfotyrosine (Y371). The N-linked (GlcNAc...) asparagine glycan is linked to N421. Residue E478 is the Nucleophile of the active site. E481 is a catalytic residue. Intrachain disulfides connect C608/C619, C916/C933, and C928/C946. A glycan (N-linked (GlcNAc...) asparagine) is linked at N613. The P-type 2 domain maps to 904–950 (WNLPVSDLEKFNCYPDDPTASEESCRQRGCLWEDTSTPGVPTCYYDT). The tract at residues 1023 to 1766 (PLNTPPQPVG…GVNTYVTQVS (744 aa)) is glucoamylase. Y1238 is modified (sulfotyrosine). D1375 acts as the Nucleophile in catalysis. Residue E1378 is part of the active site. Disordered regions lie at residues 1816–1901 (TPTK…PITT), 1994–2015 (STTV…STNA), and 2037–2091 (TVPD…SSTT). The segment covering 1817-1831 (PTKTSTIPMSSHPSP) has biased composition (polar residues). The segment covering 1832-1901 (STTNATSSET…STNATVPITT (70 aa)) has biased composition (low complexity). N2249 carries N-linked (GlcNAc...) asparagine glycosylation.

Belongs to the glycosyl hydrolase 31 family.

Its subcellular location is the membrane. It carries out the reaction Hydrolysis of terminal (1-&gt;4)-linked alpha-D-glucose residues successively from non-reducing ends of the chains with release of beta-D-glucose.. This chain is Probable maltase-glucoamylase 2, found in Homo sapiens (Human).